A 155-amino-acid chain; its full sequence is MAAGSITTLPALPEDGGSGAFPPGHFKDPKRLYCKNGGFFLRIHPDGRVDGVREKSDPHIKLQLQAEERGVVSIKGVCANRYLAMKEDGRLLASKCVTDECFFFERLESNNYNTYRSRKYSSWYVALKRTGQYKLGPKTGPGQKAILFLPMSAKS.

The propeptide occupies 1–9 (MAAGSITTL). Positions 1-20 (MAAGSITTLPALPEDGGSGA) are disordered. Asn-36 contacts heparin. The Cell attachment site; atypical signature appears at 46-48 (DGR). At Tyr-82 the chain carries Phosphotyrosine; by TEC. Positions 88–90 (DGR) match the Cell attachment site; atypical motif. Lys-95 is covalently cross-linked (Glycyl lysine isopeptide (Lys-Gly) (interchain with G-Cter in SUMO1)). The heparin-binding stretch occupies residues 128 to 144 (KRTGQYKLGPKTGPGQK).

This sequence belongs to the heparin-binding growth factors family. In terms of assembly, monomer. Homodimer. Interacts with FGFR1, FGFR2, FGFR3 and FGFR4. Affinity between fibroblast growth factors (FGFs) and their receptors is increased by heparan sulfate glycosaminoglycans that function as coreceptors. Interacts with CSPG4, FGFBP1 and TEC. Found in a complex with FGFBP1, FGF1 and FGF2. Interacts with FGFBP3. Interacts with integrin ITGAV:ITGB3; the interaction is required for FGF2 signaling. Interacts with SNORC (via the extracellular domain). Interacts with glypican GPC3. Phosphorylation at Tyr-82 regulates FGF2 unconventional secretion.

The protein resides in the secreted. Its subcellular location is the nucleus. Functionally, acts as a ligand for FGFR1, FGFR2, FGFR3 and FGFR4. Also acts as an integrin ligand which is required for FGF2 signaling. Binds to integrin ITGAV:ITGB3. Plays an important role in the regulation of cell survival, cell division, cell differentiation and cell migration. Functions as a potent mitogen in vitro. Can induce angiogenesis. Mediates phosphorylation of ERK1/2 and thereby promotes retinal lens fiber differentiation. In Bos taurus (Bovine), this protein is Fibroblast growth factor 2 (FGF2).